The primary structure comprises 283 residues: Protein FdhE homolog (283 aa).

This sequence belongs to the FdhE family.

Its subcellular location is the cytoplasm. Functionally, necessary for formate dehydrogenase activity. In Aquifex aeolicus (strain VF5), this protein is Protein FdhE homolog.